The sequence spans 614 residues: Glutamyl-tRNA(Gln) amidotransferase subunit E (614 aa).

It belongs to the GatB/GatE family. GatE subfamily. In terms of assembly, heterodimer of GatD and GatE.

The catalysed reaction is L-glutamyl-tRNA(Gln) + L-glutamine + ATP + H2O = L-glutaminyl-tRNA(Gln) + L-glutamate + ADP + phosphate + H(+). Functionally, allows the formation of correctly charged Gln-tRNA(Gln) through the transamidation of misacylated Glu-tRNA(Gln) in organisms which lack glutaminyl-tRNA synthetase. The reaction takes place in the presence of glutamine and ATP through an activated gamma-phospho-Glu-tRNA(Gln). The GatDE system is specific for glutamate and does not act on aspartate. In Methanospirillum hungatei JF-1 (strain ATCC 27890 / DSM 864 / NBRC 100397 / JF-1), this protein is Glutamyl-tRNA(Gln) amidotransferase subunit E.